Here is a 403-residue protein sequence, read N- to C-terminus: Enoyl-[acyl-carrier-protein] reductase [NADH] (403 aa).

NAD(+) contacts are provided by residues 49–54, 75–76, 112–113, and 141–142; these read GASSGY, FE, DA, and LA. Position 227 (Tyr-227) interacts with substrate. Tyr-237 (proton donor) is an active-site residue. Residues Lys-246 and 276-278 each bind NAD(+); that span reads VVT.

It belongs to the TER reductase family. In terms of assembly, monomer.

The catalysed reaction is a 2,3-saturated acyl-[ACP] + NAD(+) = a (2E)-enoyl-[ACP] + NADH + H(+). The protein operates within lipid metabolism; fatty acid biosynthesis. Involved in the final reduction of the elongation cycle of fatty acid synthesis (FAS II). Catalyzes the reduction of a carbon-carbon double bond in an enoyl moiety that is covalently linked to an acyl carrier protein (ACP). This chain is Enoyl-[acyl-carrier-protein] reductase [NADH], found in Pseudomonas putida (strain GB-1).